Here is a 211-residue protein sequence, read N- to C-terminus: Ubiquitin-conjugating enzyme E2 S (211 aa).

The UBC core domain occupies 11 to 157 (HIIRQVYKEV…ARLMTEIHAQ (147 aa)). Cys95 functions as the Glycyl thioester intermediate in the catalytic mechanism. The interval 157–211 (QGSSLRGKDPTDPCSSASATLVSGDGPMAKKHAGDRDKKLAAKKKTDKKRALRRL) is disordered. Basic residues predominate over residues 197-211 (AAKKKTDKKRALRRL).

The protein belongs to the ubiquitin-conjugating enzyme family.

It carries out the reaction S-ubiquitinyl-[E1 ubiquitin-activating enzyme]-L-cysteine + [E2 ubiquitin-conjugating enzyme]-L-cysteine = [E1 ubiquitin-activating enzyme]-L-cysteine + S-ubiquitinyl-[E2 ubiquitin-conjugating enzyme]-L-cysteine.. It functions in the pathway protein modification; protein ubiquitination. Catalyzes the covalent attachment of ubiquitin to other proteins. Acts as an essential factor of the anaphase promoting complex/cyclosome (APC/C), a cell cycle-regulated ubiquitin ligase that controls progression through mitosis. Acts by specifically elongating 'Lys-11'-linked polyubiquitin chains initiated by the E2 enzyme ube2c/ubch10 on APC/C substrates, enhancing the degradation of APC/C substrates by the proteasome and promoting mitotic exit. The sequence is that of Ubiquitin-conjugating enzyme E2 S (ube2s) from Xenopus tropicalis (Western clawed frog).